Consider the following 308-residue polypeptide: Cobalamin biosynthesis protein CobD (308 aa).

A run of 6 helical transmembrane segments spans residues 1–21 (MEILLIFLLALVIDMVFGDPP), 50–70 (FVYGIVMVIFTMALFFVPVYF), 71–91 (LLDWLQGINSIVYIIVSAILF), 151–171 (IGDGFVAPLFFFLIFGVPGVM), 202–222 (VLNFIPARLSALCILVASFFG), and 284–304 (LVLINNAGCIWVLISVGVIYF).

It belongs to the CobD/CbiB family.

It localises to the cell membrane. The protein operates within cofactor biosynthesis; adenosylcobalamin biosynthesis. Converts cobyric acid to cobinamide by the addition of aminopropanol on the F carboxylic group. The sequence is that of Cobalamin biosynthesis protein CobD from Dehalococcoides mccartyi (strain CBDB1).